Here is a 598-residue protein sequence, read N- to C-terminus: Movement protein Hsp70h (598 aa).

It belongs to the heat shock protein 70 family. Homomultimer. Interacts with p20. This interaction allows the docking of the latter to the virion.

The protein localises to the virion. Its subcellular location is the host cell junction. It is found in the host plasmodesma. Transports viral genome to neighboring plant cells directly through plasmosdesmata, without any budding. The movement protein allows efficient cell to cell propagation, by bypassing the host cell wall barrier. Two movement proteins, p6, Hsp70h and three structural proteins, CP, CPm, and P64 are essential for cell-cell movement. Also plays a role in virion formation. Together with CPm and p64, encapsidates the 5'-terminal portion of the viral genome. The sequence is that of Movement protein Hsp70h from Beta vulgaris (Sugar beet).